We begin with the raw amino-acid sequence, 1941 residues long: Myosin light chain kinase, smooth muscle (1941 aa).

2 Ig-like C2-type domains span residues 33-122 (PAFI…VELT) and 156-244 (PKFA…AELS). C177 and C228 are oxidised to a cystine. Phosphotyrosine; by ABL1 is present on Y226. A disordered region spans residues 255-329 (AVRGTKAPSP…RKVPQSSILQ (75 aa)). Over residues 286–305 (NCPSPQRSGSSARATNSHLK) the composition is skewed to polar residues. S295 is modified (phosphoserine). Residues 306 to 320 (SPQEPKPKLCEDAPR) show a composition bias toward basic and acidic residues. Residues S333 and S355 each carry the phosphoserine modification. Ig-like C2-type domains lie at 402–485 (PRFE…GQVS), 502–587 (PSFS…ATVT), 611–699 (PIFL…AVLT), and 709–809 (PWFI…APPR). 2 disulfide bridges follow: C423–C475 and C523–C571. Y452 carries the phosphotyrosine; by ABL1 and SRC modification. C730 and C793 form a disulfide bridge. Y780 carries the post-translational modification Phosphotyrosine; by ABL1. A run of 4 repeats spans residues 856 to 883 (DVRG…VGQL), 884 to 911 (DFRD…AEQM), 912 to 939 (DFRA…PQQV), and 940 to 966 (DFRS…AATP). Residues 856–985 (DVRGLLKRRV…KKSPSENGGN (130 aa)) are 5 X 28 AA approximate tandem repeats. The tract at residues 911 to 951 (MDFRANLQRQVKPKTISEEERKVHSPQQVDFRSVLAKKGTP) is actin-binding (calcium/calmodulin-sensitive). The segment at 920 to 1120 (QVKPKTISEE…KRPESQGSAP (201 aa)) is disordered. S935 is subject to Phosphoserine. The tract at residues 936–951 (PQQVDFRSVLAKKGTP) is calmodulin-binding. The stretch at 967-985 (DFRSVLGGKKKSPSENGGN) is one 1-5; truncated repeat. Tandem repeats lie at residues 990–1002 (LNVK…TPAG), 1003–1014 (DAQAIGALKPVG), 1015–1026 (NAKPAETPKPIG), 1027–1038 (NAKPTETLKPVG), and 1039–1049 (NTKPAETLKPI). Residues 990–1049 (LNVKAGESPTPAGDAQAIGALKPVGNAKPAETPKPIGNAKPTETLKPVGNTKPAETLKPI) form a 5 X 12 AA approximate tandem repeats region. The actin-binding (calcium/calmodulin-insensitive) stretch occupies residues 1048–1482 (PIANAQPSGS…TVTVNTEQKV (435 aa)). The segment covering 1052 to 1065 (AQPSGSLKPVTNAQ) has biased composition (polar residues). Residues 1085 to 1099 (AGKEEVKEVKNDVNC) show a composition bias toward basic and acidic residues. The 89-residue stretch at 1120–1208 (PVFKEKLQDV…GQAECSCQVT (89 aa)) folds into the Ig-like C2-type 7 domain. A disulfide bridge links C1141 with C1192. Residues 1212-1257 (AQTSENTKAPEMKSRRPKSSLPPVLGTESDATVKKKPAPKTPTKAA) form a disordered region. Residues 1260-1348 (PQIIQFPEDQ…GSRQAQVNLT (89 aa)) form the Ig-like C2-type 8 domain. Residues 1356 to 1449 (PAGTPCASDI…ESELTAVGEK (94 aa)) form the Fibronectin type-III domain. A disordered region spans residues 1435–1469 (SEPSQESELTAVGEKPEEPKDEVEVSDDDEKEPEV). Residues 1453 to 1467 (PKDEVEVSDDDEKEP) show a composition bias toward acidic residues. The residue at position 1460 (S1460) is a Phosphoserine. A Phosphotyrosine; by ABL1 modification is found at Y1471. Positions 1486–1741 (YDIEERLGSG…CTQCLQHPWL (256 aa)) constitute a Protein kinase domain. Residues 1492-1500 (LGSGKFGQV) and K1515 each bind ATP. Phosphotyrosine; by ABL1 is present on Y1597. Catalysis depends on D1607, which acts as the Proton acceptor. Y1657 carries the post-translational modification Phosphotyrosine; by ABL1. The interval 1733-1796 (TQCLQHPWLM…SGLSGRKSST (64 aa)) is calmodulin-binding. S1781, S1782, S1794, S1795, and S1798 each carry phosphoserine. Residues 1789 to 1809 (LSGRKSSTGSPTSPINAEKLE) are disordered. The segment covering 1792-1803 (RKSSTGSPTSPI) has biased composition (polar residues). T1800 carries the post-translational modification Phosphothreonine. A Phosphoserine modification is found at S1801. The 90-residue stretch at 1831–1920 (PYFSKTIRDL…GEATCTAELI (90 aa)) folds into the Ig-like C2-type 9 domain. An intrachain disulfide couples C1852 to C1904.

The protein belongs to the protein kinase superfamily. CAMK Ser/Thr protein kinase family. All isoforms including Telokin bind calmodulin. Interacts with CTTN; this interaction is reduced during thrombin-induced endothelial cell (EC) contraction but is promoted by the barrier-protective agonist sphingosine 1-phosphate (S1P) within lamellipodia. A complex made of ABL1, CTTN and MYLK regulates cortical actin-based cytoskeletal rearrangement critical to sphingosine 1-phosphate (S1P)-mediated endothelial cell (EC) barrier enhancement. Binds to NAA10/ARD1. Interacts with SVIL and PTK2B/PYK2. Requires Mg(2+) as cofactor. Ca(2+) is required as a cofactor. Can probably be down-regulated by phosphorylation. Tyrosine phosphorylation by ABL1 increases kinase activity, reverses MLCK-mediated inhibition of Arp2/3-mediated actin polymerization, and enhances CTTN-binding. Phosphorylation by SRC at Tyr-452 promotes CTTN binding. Post-translationally, the C-terminus is deglutamylated by AGTPBP1/CCP1, AGBL1/CCP4 and AGBL4/CCP6, leading to the formation of Myosin light chain kinase, smooth muscle, deglutamylated form. The consequences of C-terminal deglutamylation are unknown. In terms of tissue distribution, smooth muscle isoform is expressed in all tissues with highest levels in bladder, uterus, vas deferens, colon, ileum, and tracheae. Isoform 1 is expressed in lung, bladder, and vas deferens. Telokin is expressed in smooth muscle cells of the gut, reproductive tract and urinary tract, including in uterus, vas deferens, bladder, colon, kidney, ureter and ovary. Telokin is also detected in the trachea.

Its subcellular location is the cytoplasm. The protein localises to the cell projection. It localises to the lamellipodium. It is found in the cleavage furrow. The protein resides in the cytoskeleton. Its subcellular location is the stress fiber. The enzyme catalyses L-seryl-[myosin light chain] + ATP = O-phospho-L-seryl-[myosin light chain] + ADP + H(+). The catalysed reaction is L-threonyl-[myosin light chain] + ATP = O-phospho-L-threonyl-[myosin light chain] + ADP + H(+). In terms of biological role, calcium/calmodulin-dependent myosin light chain kinase implicated in smooth muscle contraction via phosphorylation of myosin light chains (MLC). Also regulates actin-myosin interaction through a non-kinase activity. Phosphorylates PTK2B/PYK2 and myosin light-chains. Involved in the inflammatory response (e.g. apoptosis, vascular permeability, leukocyte diapedesis), cell motility and morphology, airway hyperreactivity and other activities relevant to asthma. Required for tonic airway smooth muscle contraction that is necessary for physiological and asthmatic airway resistance. Necessary for gastrointestinal motility. Implicated in the regulation of endothelial as well as vascular permeability, probably via the regulation of cytoskeletal rearrangements. In the nervous system it has been shown to control the growth initiation of astrocytic processes in culture and to participate in transmitter release at synapses formed between cultured sympathetic ganglion cells. Critical participant in signaling sequences that result in fibroblast apoptosis. Plays a role in the regulation of epithelial cell survival. Required for epithelial wound healing, especially during actomyosin ring contraction during purse-string wound closure. Mediates RhoA-dependent membrane blebbing. Triggers TRPC5 channel activity in a calcium-dependent signaling, by inducing its subcellular localization at the plasma membrane. Promotes cell migration (including tumor cells) and tumor metastasis. PTK2B/PYK2 activation by phosphorylation mediates ITGB2 activation and is thus essential to trigger neutrophil transmigration during acute lung injury (ALI). May regulate optic nerve head astrocyte migration. Probably involved in mitotic cytoskeletal regulation. Regulates tight junction probably by modulating ZO-1 exchange in the perijunctional actomyosin ring. Mediates burn-induced microvascular barrier injury; triggers endothelial contraction in the development of microvascular hyperpermeability by phosphorylating MLC. Essential for intestinal barrier dysfunction. Mediates Giardia spp.-mediated reduced epithelial barrier function during giardiasis intestinal infection via reorganization of cytoskeletal F-actin and tight junctional ZO-1. Necessary for hypotonicity-induced Ca(2+) entry and subsequent activation of volume-sensitive organic osmolyte/anion channels (VSOAC) in cervical cancer cells. The protein is Myosin light chain kinase, smooth muscle of Mus musculus (Mouse).